The primary structure comprises 436 residues: Indole-3-acetyl-aspartic acid hydrolase (436 aa).

This sequence belongs to the peptidase M20 family. In terms of assembly, monomer.

The enzyme catalyses (indol-3-yl)acetyl-L-aspartate + H2O = (indol-3-yl)acetate + L-aspartate. Functionally, hydrolyzes indole-3-acetyl-aspartate (IAA-Asp) to indole-3-acetic acid (IAA). Shows an exclusively high substrate specificity for IAA-Asp. The polypeptide is Indole-3-acetyl-aspartic acid hydrolase (Enterobacter agglomerans (Erwinia herbicola)).